An 82-amino-acid polypeptide reads, in one-letter code: Hydrogenase maturation factor HybG (82 aa).

The protein belongs to the HupF/HypC family.

It functions in the pathway protein modification; [NiFe] hydrogenase maturation. In terms of biological role, involved in the maturation of [NiFe] hydrogenases. Involved in the biosynthesis of the Fe(CN)(2)CO cofactor. HybG delivers iron-bound CO(2) to HypD where reduction to CO probably occurs. In complex with HypD, accepts the cyanide ligand generated by HypF and HypE, and also coordinates the carbon monoxide ligand. The polypeptide is Hydrogenase maturation factor HybG (hybG) (Escherichia coli O157:H7).